The sequence spans 186 residues: MESFSSKDMAMKAQKKILSHMASKSMVQMLIDDTSSEILDELYRISKEHSGNRTEAQKVVKDLVKVVVKVGVLFRHNRFSKEELSLAQDFKKKLHQGVMTAISFQEVEFTFDKAVMTELLTDCRDILLKLVEKHLTLKSFGRIRHVFNHYSDPDLLTNLYTPGGPLWPNLTKICNGLNKLVEEGKL.

Belongs to the TNFAIP8 family. TNFAIP8L2 subfamily.

Functionally, acts as a negative regulator of innate and adaptive immunity by maintaining immune homeostasis. Negative regulator of Toll-like receptor and T-cell receptor function. Prevents hyperresponsiveness of the immune system and maintains immune homeostasis. Inhibits jun/ap1 and NF-kappa-B activation. Promotes Fas-induced apoptosis. The protein is Tumor necrosis factor alpha-induced protein 8-like protein 2 (tnfaip8l2) of Salmo salar (Atlantic salmon).